We begin with the raw amino-acid sequence, 206 residues long: MIGRLTGNLVVKQAPNLMVDINGVGYDLLAPMSTFYQLPELDAKVVLHTHFAVSETSQQLFGFIDQQDREFFRMLIKVNGVGPKMAVGIMSMETNDIVRCILEDNLNALVKVPGVGKKTAERLIIEMRDKLKSWQVTPSVDATGSLVALDSAAPSQNAIVAEAESALVALGYKPVEASKAVARVTSDEITRSEDLIRLALRNMIPA.

Residues 1–64 (MIGRLTGNLV…ETSQQLFGFI (64 aa)) are domain I. The segment at 65–142 (DQQDREFFRM…SWQVTPSVDA (78 aa)) is domain II. The tract at residues 143 to 154 (TGSLVALDSAAP) is flexible linker. The domain III stretch occupies residues 155–206 (SQNAIVAEAESALVALGYKPVEASKAVARVTSDEITRSEDLIRLALRNMIPA).

The protein belongs to the RuvA family. As to quaternary structure, homotetramer. Forms an RuvA(8)-RuvB(12)-Holliday junction (HJ) complex. HJ DNA is sandwiched between 2 RuvA tetramers; dsDNA enters through RuvA and exits via RuvB. An RuvB hexamer assembles on each DNA strand where it exits the tetramer. Each RuvB hexamer is contacted by two RuvA subunits (via domain III) on 2 adjacent RuvB subunits; this complex drives branch migration. In the full resolvosome a probable DNA-RuvA(4)-RuvB(12)-RuvC(2) complex forms which resolves the HJ.

It is found in the cytoplasm. Functionally, the RuvA-RuvB-RuvC complex processes Holliday junction (HJ) DNA during genetic recombination and DNA repair, while the RuvA-RuvB complex plays an important role in the rescue of blocked DNA replication forks via replication fork reversal (RFR). RuvA specifically binds to HJ cruciform DNA, conferring on it an open structure. The RuvB hexamer acts as an ATP-dependent pump, pulling dsDNA into and through the RuvAB complex. HJ branch migration allows RuvC to scan DNA until it finds its consensus sequence, where it cleaves and resolves the cruciform DNA. The sequence is that of Holliday junction branch migration complex subunit RuvA from Teredinibacter turnerae (strain ATCC 39867 / T7901).